Consider the following 210-residue polypeptide: Pyridoxine/pyridoxamine 5'-phosphate oxidase (210 aa).

Residues 7-10 (RQSY) and K65 each bind substrate. FMN-binding positions include 60–65 (RIVLIK), 75–76 (FT), R81, K82, and Q104. Residues Y122, R126, and S130 each contribute to the substrate site. FMN contacts are provided by residues 139-140 (QS) and W182. 188–190 (RLH) contributes to the substrate binding site. R192 lines the FMN pocket.

This sequence belongs to the pyridoxamine 5'-phosphate oxidase family. Homodimer. The cofactor is FMN.

The enzyme catalyses pyridoxamine 5'-phosphate + O2 + H2O = pyridoxal 5'-phosphate + H2O2 + NH4(+). It carries out the reaction pyridoxine 5'-phosphate + O2 = pyridoxal 5'-phosphate + H2O2. The protein operates within cofactor metabolism; pyridoxal 5'-phosphate salvage; pyridoxal 5'-phosphate from pyridoxamine 5'-phosphate: step 1/1. Its pathway is cofactor metabolism; pyridoxal 5'-phosphate salvage; pyridoxal 5'-phosphate from pyridoxine 5'-phosphate: step 1/1. Catalyzes the oxidation of either pyridoxine 5'-phosphate (PNP) or pyridoxamine 5'-phosphate (PMP) into pyridoxal 5'-phosphate (PLP). This chain is Pyridoxine/pyridoxamine 5'-phosphate oxidase, found in Bordetella bronchiseptica (strain ATCC BAA-588 / NCTC 13252 / RB50) (Alcaligenes bronchisepticus).